The following is a 640-amino-acid chain: Chaperone protein HtpG (640 aa).

The a; substrate-binding stretch occupies residues 1 to 348 (MADVAHQETH…SNDLPLNVSR (348 aa)). The segment at 349–565 (EILQDNKITQ…GTGMSTQMIK (217 aa)) is b. The tract at residues 566–640 (LMQAAGQPVP…LNTLLMNLAK (75 aa)) is c.

It belongs to the heat shock protein 90 family. In terms of assembly, homodimer.

It is found in the cytoplasm. Its function is as follows. Molecular chaperone. Has ATPase activity. The polypeptide is Chaperone protein HtpG (Pseudoalteromonas atlantica (strain T6c / ATCC BAA-1087)).